A 414-amino-acid polypeptide reads, in one-letter code: TBC domain-containing protein C1778.09 (414 aa).

Residues 158 to 343 enclose the Rab-GAP TBC domain; the sequence is GIPDCWRSIA…RIWDLLFLLG (186 aa).

It localises to the cytoplasm. It is found in the nucleus. The polypeptide is TBC domain-containing protein C1778.09 (Schizosaccharomyces pombe (strain 972 / ATCC 24843) (Fission yeast)).